We begin with the raw amino-acid sequence, 833 residues long: Neurogenic locus protein delta (833 aa).

The first 18 residues, 1 to 18 (MHWIKCLLTAFICFTVIV), serve as a signal peptide directing secretion. Topologically, residues 19 to 594 (QVHSSGSFEL…ARADGLTNAQ (576 aa)) are extracellular. 2 cysteine pairs are disulfide-bonded: Cys-46–Cys-61 and Cys-68–Cys-82. N-linked (GlcNAc...) asparagine glycosylation is found at Asn-98, Asn-137, and Asn-167. A DSL domain is found at 182 to 226 (VTCDLNYYGSGCAKFCRPRDDSFGHSTCSETGEIICLTGWQGDYC). 30 disulfides stabilise this stretch: Cys-184-Cys-193, Cys-197-Cys-209, Cys-217-Cys-226, Cys-231-Cys-240, Cys-235-Cys-246, Cys-248-Cys-257, Cys-260-Cys-271, Cys-266-Cys-277, Cys-279-Cys-288, Cys-295-Cys-307, Cys-301-Cys-317, Cys-319-Cys-328, Cys-335-Cys-348, Cys-342-Cys-360, Cys-362-Cys-371, Cys-378-Cys-388, Cys-383-Cys-404, Cys-406-Cys-415, Cys-422-Cys-433, Cys-427-Cys-439, Cys-441-Cys-450, Cys-457-Cys-468, Cys-462-Cys-477, Cys-479-Cys-488, Cys-495-Cys-506, Cys-500-Cys-515, Cys-517-Cys-526, Cys-533-Cys-544, Cys-538-Cys-553, and Cys-555-Cys-564. EGF-like domains are found at residues 227 to 258 (HIPK…ALCN), 256 to 289 (LCNE…LYCN), 291 to 329 (DLNY…DDCE), 331 to 372 (EIYS…KMCE), 374 to 416 (KVLT…PNCD), and 418 to 451 (QLDN…TRCE). The region spanning 453 to 489 (NIDDCLGHQCENGGTCIDMVNQYRCQCVPGFHGTHCS) is the EGF-like 7; calcium-binding domain. The EGF-like 8 domain maps to 491-527 (KVDLCLIRPCANGGTCLNLNNDYQCTCRAGFTGKDCS). An EGF-like 9; calcium-binding domain is found at 529–565 (DIDECSSGPCHNGGTCMNRVNSFECVCANGFRGKQCD). A helical membrane pass occupies residues 595-617 (VVLIAVFSVAMPLVAVIAACVVF). The Cytoplasmic segment spans residues 618-833 (CMKRKRKRAQ…RSVVCGTPHM (216 aa)). At Thr-666 the chain carries Phosphothreonine. The disordered stretch occupies residues 743–773 (QLNTDPTLMHRGSPAGSSAKGASGGGPGAAE). The segment covering 754 to 763 (GSPAGSSAKG) has biased composition (low complexity).

In terms of assembly, interacts with Notch (N) via the EGF repeats and the N EGF repeats. Ubiquitinated by Mib, leading to its endocytosis and subsequent degradation. Detected in all areas with neurogenic abilities, for example the neurogenic ectoderm and the primordia of the sense organs. Later expression is restricted to those cells that have adopted a neural fate.

Its subcellular location is the membrane. Acts as a ligand for Notch (N) receptor. Essential for proper differentiation of ectoderm. Delta is required for the correct separation of neural and epidermal cell lineages. Fringe (fng) acts in the Golgi to determine the type of O-linked fucose on the EGF modules in N, altering the ability of N to bind with Delta. O-fut1 also has a role in modulating the interaction. In Drosophila melanogaster (Fruit fly), this protein is Neurogenic locus protein delta.